The chain runs to 278 residues: Heat stress transcription factor C-2b (278 aa).

The segment covering 105–114 has biased composition (gly residues); that stretch reads AAGGGGGGGG. Residues 105 to 132 are disordered; it reads AAGGGGGGGGGKRRDASADGGGGGGDED. The interval 143–179 is hydrophobic repeat HR-A/B; it reads LKQEQRTIDDRVAAMWRRVQETERRPKQMLAFLLKVV. Positions 219–222 match the Nuclear localization signal motif; the sequence is KRAR.

This sequence belongs to the HSF family. Class C subfamily. Homotrimer. Exhibits temperature-dependent phosphorylation.

The protein resides in the nucleus. Functionally, transcriptional regulator that specifically binds DNA of heat shock promoter elements (HSE). The chain is Heat stress transcription factor C-2b (HSFC2B) from Oryza sativa subsp. japonica (Rice).